Reading from the N-terminus, the 301-residue chain is NTE family protein RssA (301 aa).

One can recognise a PNPLA domain in the interval 8–168 (LALGSGAARG…VNPIPISLTR (161 aa)). Positions 39 to 43 (GCSIG) match the GXSXG motif. The active-site Nucleophile is S41. The active-site Proton acceptor is the D155. The DGA/G motif lies at 155-157 (DGA).

This sequence belongs to the NTE family.

This is NTE family protein RssA (rssA) from Escherichia coli (strain K12).